Reading from the N-terminus, the 264-residue chain is MAQIHPTAIVDPAAELADSVVVGAYAVIGPQVRIGAGTTIGPHCVIEGRTTIGVDNRFFQFSSIGALPQDMSHDGEITELVIGDRNTVREFCTFNTGTRKEDGVTRVGSDNWIMAYVHLAHDVRLGSHCVLANNATLAGHVHVGDWATIGGLSGVHQFVHIGAHAMIGFQGHVSQDVPPYMTVDGNPLTVRAVNLTGLRRRGFSNERIGVIRQMHKLLYRDSLTLEQAVEAVGALRGQQAEAQSDADIAVMLDFIAGAKRGLVR.

This sequence belongs to the transferase hexapeptide repeat family. LpxA subfamily. As to quaternary structure, homotrimer.

The protein localises to the cytoplasm. It catalyses the reaction a (3R)-hydroxyacyl-[ACP] + UDP-N-acetyl-alpha-D-glucosamine = a UDP-3-O-[(3R)-3-hydroxyacyl]-N-acetyl-alpha-D-glucosamine + holo-[ACP]. The protein operates within glycolipid biosynthesis; lipid IV(A) biosynthesis; lipid IV(A) from (3R)-3-hydroxytetradecanoyl-[acyl-carrier-protein] and UDP-N-acetyl-alpha-D-glucosamine: step 1/6. Its function is as follows. Involved in the biosynthesis of lipid A, a phosphorylated glycolipid that anchors the lipopolysaccharide to the outer membrane of the cell. This is Acyl-[acyl-carrier-protein]--UDP-N-acetylglucosamine O-acyltransferase from Leptothrix cholodnii (strain ATCC 51168 / LMG 8142 / SP-6) (Leptothrix discophora (strain SP-6)).